Here is a 310-residue protein sequence, read N- to C-terminus: MNKVNILPSDTNMKITLFSELSVGISANSILFFAHLCMFFEENRSKPIDLCIAFLSLTQLMLLVTMGLIAADMFMAQGIWDITTCRSLIYFHRLLRGFNLCAACLLHILWTFTLSPRSSCLTKFKHKSPHHISGAYLFFCVLYMSFSSHLFVLVIATSNLTSDHFMYVTQSCSLLPMSYSRTSTFSLLMVTREVFLISLMALSSGYMVTLLWRHKKQAQHLHSTRLSSKASPQQRATRTILLLMTFFVVFYILGTVIFHSRTKFKDGSIFYCVQIIVSHSYATISPFVFVFSEKRIIKFFRSMCGRIVNT.

Residues 1-19 (MNKVNILPSDTNMKITLFS) lie on the Extracellular side of the membrane. A helical transmembrane segment spans residues 20 to 40 (ELSVGISANSILFFAHLCMFF). Topologically, residues 41–49 (EENRSKPID) are cytoplasmic. The chain crosses the membrane as a helical span at residues 50–70 (LCIAFLSLTQLMLLVTMGLIA). The Extracellular portion of the chain corresponds to 71-93 (ADMFMAQGIWDITTCRSLIYFHR). An intrachain disulfide couples Cys-85 to Cys-172. The chain crosses the membrane as a helical span at residues 94–114 (LLRGFNLCAACLLHILWTFTL). At 115–134 (SPRSSCLTKFKHKSPHHISG) the chain is on the cytoplasmic side. A helical transmembrane segment spans residues 135–155 (AYLFFCVLYMSFSSHLFVLVI). At 156–193 (ATSNLTSDHFMYVTQSCSLLPMSYSRTSTFSLLMVTRE) the chain is on the extracellular side. Residue Asn-159 is glycosylated (N-linked (GlcNAc...) asparagine). The helical transmembrane segment at 194–214 (VFLISLMALSSGYMVTLLWRH) threads the bilayer. Residues 215-238 (KKQAQHLHSTRLSSKASPQQRATR) lie on the Cytoplasmic side of the membrane. The chain crosses the membrane as a helical span at residues 239–259 (TILLLMTFFVVFYILGTVIFH). Over 260–268 (SRTKFKDGS) the chain is Extracellular. The helical transmembrane segment at 269-289 (IFYCVQIIVSHSYATISPFVF) threads the bilayer. Over 290 to 310 (VFSEKRIIKFFRSMCGRIVNT) the chain is Cytoplasmic.

The protein belongs to the G-protein coupled receptor 1 family. Expressed in 1-4% of neurons of the vomeronasal organ. Only one pheromone receptor gene may be expressed in a particular neuron. Not expressed in the main olfactory epithelium.

Its subcellular location is the cell membrane. Its function is as follows. Putative pheromone receptor implicated in the regulation of social as well as reproductive behavior. The sequence is that of Vomeronasal type-1 receptor 101 (Vom1r101) from Rattus norvegicus (Rat).